We begin with the raw amino-acid sequence, 146 residues long: Ribosome-binding factor A (146 aa).

The span at Gln-122–Asn-134 shows a compositional bias: polar residues. The disordered stretch occupies residues Gln-122–Ala-146. Positions Asp-135–Ala-146 are enriched in acidic residues.

Belongs to the RbfA family. Monomer. Binds 30S ribosomal subunits, but not 50S ribosomal subunits or 70S ribosomes.

Its subcellular location is the cytoplasm. In terms of biological role, one of several proteins that assist in the late maturation steps of the functional core of the 30S ribosomal subunit. Associates with free 30S ribosomal subunits (but not with 30S subunits that are part of 70S ribosomes or polysomes). Required for efficient processing of 16S rRNA. May interact with the 5'-terminal helix region of 16S rRNA. In Shewanella sp. (strain ANA-3), this protein is Ribosome-binding factor A.